The following is a 327-amino-acid chain: L-lactate dehydrogenase (327 aa).

NAD(+)-binding positions include Val18, Asp39, Lys44, Tyr69, and 83–84 (GA). Substrate-binding positions include Gln86, Arg92, and 124–127 (NPVD). Residues 122–124 (AAN) and Ser147 each bind NAD(+). 152–155 (DSAR) provides a ligand contact to substrate. Beta-D-fructose 1,6-bisphosphate-binding residues include Arg157 and His172. The active-site Proton acceptor is His179. Position 224 is a phosphotyrosine (Tyr224). Thr233 lines the substrate pocket.

It belongs to the LDH/MDH superfamily. LDH family. Homotetramer.

The protein localises to the cytoplasm. The enzyme catalyses (S)-lactate + NAD(+) = pyruvate + NADH + H(+). The protein operates within fermentation; pyruvate fermentation to lactate; (S)-lactate from pyruvate: step 1/1. Allosterically activated by fructose 1,6-bisphosphate (FBP). In terms of biological role, catalyzes the conversion of lactate to pyruvate. The polypeptide is L-lactate dehydrogenase (Streptococcus equi subsp. zooepidemicus (strain H70)).